A 443-amino-acid chain; its full sequence is Leucine/methionine racemase (443 aa).

Residues 110–111 (GS) and glutamine 247 contribute to the pyridoxal 5'-phosphate site. Lysine 273 bears the N6-(pyridoxal phosphate)lysine mark. Threonine 302 provides a ligand contact to pyridoxal 5'-phosphate.

The protein belongs to the class-III pyridoxal-phosphate-dependent aminotransferase family. Pyridoxal 5'-phosphate serves as cofactor.

The enzyme catalyses L-leucine = D-leucine. It carries out the reaction L-methionine = D-methionine. Activity is strongly inhibited by several metal ions, including Co(2+), Zn(2+), Ni(2+), Cu(2+) and Fe(3+), and nonsubstrate amino acids such as L-arginine and L-lysine. Activity is completely abolished in the presence of hydroxylamine, an inhibitor of pyridoxal phosphate-dependent enzymes. Its function is as follows. Amino acid racemase with moderate substrate specificity. Is primarily active toward leucine, which is the preferred substrate, and methionine. Also exhibits lower levels of activity toward phenylalanine, alanine and serine. This Thermococcus litoralis (strain ATCC 51850 / DSM 5473 / JCM 8560 / NS-C) protein is Leucine/methionine racemase.